The following is a 239-amino-acid chain: tRNA (guanine-N(7)-)-methyltransferase (239 aa).

The S-adenosyl-L-methionine site is built by Glu69, Glu94, Asp121, and Asp144. Asp144 is an active-site residue. Lys148 provides a ligand contact to substrate. Positions 150-155 (RHNKRR) are interaction with RNA. Residues Asp180 and 217-220 (TKFE) each bind substrate.

It belongs to the class I-like SAM-binding methyltransferase superfamily. TrmB family. As to quaternary structure, monomer.

The enzyme catalyses guanosine(46) in tRNA + S-adenosyl-L-methionine = N(7)-methylguanosine(46) in tRNA + S-adenosyl-L-homocysteine. It functions in the pathway tRNA modification; N(7)-methylguanine-tRNA biosynthesis. Its function is as follows. Catalyzes the formation of N(7)-methylguanine at position 46 (m7G46) in tRNA. This is tRNA (guanine-N(7)-)-methyltransferase from Yersinia enterocolitica serotype O:8 / biotype 1B (strain NCTC 13174 / 8081).